Reading from the N-terminus, the 129-residue chain is Small ribosomal subunit protein uS11 (129 aa).

Belongs to the universal ribosomal protein uS11 family. In terms of assembly, part of the 30S ribosomal subunit. Interacts with proteins S7 and S18. Binds to IF-3.

In terms of biological role, located on the platform of the 30S subunit, it bridges several disparate RNA helices of the 16S rRNA. Forms part of the Shine-Dalgarno cleft in the 70S ribosome. This Methylobacillus flagellatus (strain ATCC 51484 / DSM 6875 / VKM B-1610 / KT) protein is Small ribosomal subunit protein uS11.